We begin with the raw amino-acid sequence, 397 residues long: Phosphoglycerate kinase (397 aa).

Substrate-binding positions include 21–23 (DFN), Arg-37, 60–63 (HLGR), Arg-119, and Arg-152. ATP-binding positions include Lys-203, Gly-294, Glu-325, and 354-357 (GGDS).

The protein belongs to the phosphoglycerate kinase family. Monomer.

The protein localises to the cytoplasm. It carries out the reaction (2R)-3-phosphoglycerate + ATP = (2R)-3-phospho-glyceroyl phosphate + ADP. It functions in the pathway carbohydrate degradation; glycolysis; pyruvate from D-glyceraldehyde 3-phosphate: step 2/5. This Chlorobium phaeovibrioides (strain DSM 265 / 1930) (Prosthecochloris vibrioformis (strain DSM 265)) protein is Phosphoglycerate kinase.